The primary structure comprises 118 residues: uncharacterized protein (118 aa).

Over residues 1–12 (MADDNVSFTDQG) the composition is skewed to polar residues. The disordered stretch occupies residues 1 to 63 (MADDNVSFTD…KKGKTKKVRK (63 aa)). The segment covering 39–63 (TKKKGKKNKKSKKKAKKGKTKKVRK) has biased composition (basic residues). A helical membrane pass occupies residues 81–101 (FCAGIIVAMIMLFVIIIYGII).

Its subcellular location is the membrane. This is an uncharacterized protein from Caenorhabditis elegans.